Here is a 219-residue protein sequence, read N- to C-terminus: Probable nicotinate-nucleotide adenylyltransferase (219 aa).

It belongs to the NadD family.

The catalysed reaction is nicotinate beta-D-ribonucleotide + ATP + H(+) = deamido-NAD(+) + diphosphate. It participates in cofactor biosynthesis; NAD(+) biosynthesis; deamido-NAD(+) from nicotinate D-ribonucleotide: step 1/1. Functionally, catalyzes the reversible adenylation of nicotinate mononucleotide (NaMN) to nicotinic acid adenine dinucleotide (NaAD). This Cronobacter sakazakii (strain ATCC BAA-894) (Enterobacter sakazakii) protein is Probable nicotinate-nucleotide adenylyltransferase.